Consider the following 260-residue polypeptide: Global transcriptional regulator CodY (260 aa).

The segment at 1–159 is GAF domain; sequence MPNLLEKTRK…SSTVVGIQLL (159 aa). A DNA-binding region (H-T-H motif) is located at residues 207–226; sequence ASVIADRIGITRSVIVNALR.

Belongs to the CodY family.

It localises to the cytoplasm. In terms of biological role, DNA-binding global transcriptional regulator which is involved in the adaptive response to starvation and acts by directly or indirectly controlling the expression of numerous genes in response to nutrient availability. During rapid exponential growth, CodY is highly active and represses genes whose products allow adaptation to nutrient depletion. This chain is Global transcriptional regulator CodY, found in Streptococcus uberis (strain ATCC BAA-854 / 0140J).